The sequence spans 215 residues: UPF0502 protein YceH (215 aa).

An N6-acetyllysine modification is found at K80.

Belongs to the UPF0502 family.

This chain is UPF0502 protein YceH, found in Shigella boydii serotype 4 (strain Sb227).